A 462-amino-acid polypeptide reads, in one-letter code: tRNA modification GTPase MnmE (462 aa).

3 residues coordinate (6S)-5-formyl-5,6,7,8-tetrahydrofolate: Arg-23, Glu-88, and Arg-127. Positions Gly-224–Phe-383 constitute a TrmE-type G domain. Asn-234 contributes to the K(+) binding site. Residues Asn-234 to Ser-239, Thr-253 to Thr-259, and Asp-278 to Gly-281 each bind GTP. Ser-238 serves as a coordination point for Mg(2+). The K(+) site is built by Thr-253, Ile-255, and Thr-258. Position 259 (Thr-259) interacts with Mg(2+). Residue Lys-462 participates in (6S)-5-formyl-5,6,7,8-tetrahydrofolate binding.

It belongs to the TRAFAC class TrmE-Era-EngA-EngB-Septin-like GTPase superfamily. TrmE GTPase family. As to quaternary structure, homodimer. Heterotetramer of two MnmE and two MnmG subunits. K(+) is required as a cofactor.

The protein resides in the cytoplasm. In terms of biological role, exhibits a very high intrinsic GTPase hydrolysis rate. Involved in the addition of a carboxymethylaminomethyl (cmnm) group at the wobble position (U34) of certain tRNAs, forming tRNA-cmnm(5)s(2)U34. The polypeptide is tRNA modification GTPase MnmE (Geobacillus thermodenitrificans (strain NG80-2)).